The primary structure comprises 714 residues: Putative glutamine--fructose-6-phosphate aminotransferase [isomerizing] (714 aa).

The active-site Nucleophile; for GATase activity is Cys-2. The Glutamine amidotransferase type-2 domain maps to 2 to 321 (CGIFGYCNFL…DNDIAHIYDG (320 aa)). The segment covering 266-280 (STTSTFNHGSSTETP) has biased composition (polar residues). Positions 266–285 (STTSTFNHGSSTETPAENGL) are disordered. 2 consecutive SIS domains span residues 387–526 (WLTE…DLVS) and 559–704 (CDKK…VDLP).

The catalysed reaction is D-fructose 6-phosphate + L-glutamine = D-glucosamine 6-phosphate + L-glutamate. It functions in the pathway nucleotide-sugar biosynthesis; UDP-N-acetyl-alpha-D-glucosamine biosynthesis; alpha-D-glucosamine 6-phosphate from D-fructose 6-phosphate: step 1/1. Its function is as follows. Involved in amino sugar synthesis (formation of chitin, supplies the amino sugars of asparagine-linked oligosaccharides of glycoproteins). The polypeptide is Putative glutamine--fructose-6-phosphate aminotransferase [isomerizing] (Saccharomyces cerevisiae (strain YJM789) (Baker's yeast)).